The sequence spans 354 residues: ATPase GET3 (354 aa).

26-33 is an ATP binding site; the sequence is KGGVGKTT. The active site involves Asp-57. ATP-binding residues include Glu-245 and Asn-272. Cys-285 and Cys-288 together coordinate Zn(2+).

Belongs to the arsA ATPase family. Homodimer. Component of the Golgi to ER traffic (GET) complex, which is composed of GET1, GET2 and GET3. Within the complex, GET1 and GET2 form a heterotetramer which is stabilized by phosphatidylinositol binding and which binds to the GET3 homodimer. Interacts with the chloride channel protein GEF1.

The protein localises to the cytoplasm. The protein resides in the endoplasmic reticulum. It is found in the golgi apparatus. ATPase required for the post-translational delivery of tail-anchored (TA) proteins to the endoplasmic reticulum. Recognizes and selectively binds the transmembrane domain of TA proteins in the cytosol. This complex then targets to the endoplasmic reticulum by membrane-bound receptors GET1 and GET2, where the tail-anchored protein is released for insertion. This process is regulated by ATP binding and hydrolysis. ATP binding drives the homodimer towards the closed dimer state, facilitating recognition of newly synthesized TA membrane proteins. ATP hydrolysis is required for insertion. Subsequently, the homodimer reverts towards the open dimer state, lowering its affinity for the GET1-GET2 receptor, and returning it to the cytosol to initiate a new round of targeting. Cooperates with the HDEL receptor ERD2 to mediate the ATP-dependent retrieval of resident ER proteins that contain a C-terminal H-D-E-L retention signal from the Golgi to the ER. Involved in low-level resistance to the oxyanions arsenite and arsenate, and in heat tolerance. The chain is ATPase GET3 from Saccharomyces cerevisiae (strain RM11-1a) (Baker's yeast).